The following is a 1079-amino-acid chain: Carbamoyl phosphate synthase large chain (1079 aa).

The tract at residues 2–403 is carboxyphosphate synthetic domain; it reads PKSTDIKSIL…SIQKAIRGLE (402 aa). Residues R129, R169, G175, G176, E208, L210, E215, G241, I242, H243, Q285, and E299 each coordinate ATP. Residues 133–328 form the ATP-grasp 1 domain; that stretch reads EHSMKKLNLE…IAKIAAKLAI (196 aa). Residues Q285, E299, and N301 each coordinate Mg(2+). Mn(2+) contacts are provided by Q285, E299, and N301. An oligomerization domain region spans residues 404-553; it reads VGASGFDSKI…YSTWEDECES (150 aa). Residues 554-936 form a carbamoyl phosphate synthetic domain region; sequence HPSKNNKKII…AFSKSMLGAH (383 aa). Positions 679–870 constitute an ATP-grasp 2 domain; the sequence is QKTVNKLRLQ…LAKISVRVMC (192 aa). ATP-binding residues include R715, Q754, L756, E761, G786, V787, H788, S789, Q829, and E841. Residues Q829, E841, and N843 each contribute to the Mg(2+) site. Mn(2+) is bound by residues Q829, E841, and N843. One can recognise an MGS-like domain in the interval 937 to 1079; that stretch reads TNMKKSGRVL…KKIQLFYTKK (143 aa). The segment at 937 to 1079 is allosteric domain; sequence TNMKKSGRVL…KKIQLFYTKK (143 aa).

Belongs to the CarB family. Composed of two chains; the small (or glutamine) chain promotes the hydrolysis of glutamine to ammonia, which is used by the large (or ammonia) chain to synthesize carbamoyl phosphate. Tetramer of heterodimers (alpha,beta)4. The cofactor is Mg(2+). It depends on Mn(2+) as a cofactor.

The catalysed reaction is hydrogencarbonate + L-glutamine + 2 ATP + H2O = carbamoyl phosphate + L-glutamate + 2 ADP + phosphate + 2 H(+). It catalyses the reaction hydrogencarbonate + NH4(+) + 2 ATP = carbamoyl phosphate + 2 ADP + phosphate + 2 H(+). It functions in the pathway amino-acid biosynthesis; L-arginine biosynthesis; carbamoyl phosphate from bicarbonate: step 1/1. The protein operates within pyrimidine metabolism; UMP biosynthesis via de novo pathway; (S)-dihydroorotate from bicarbonate: step 1/3. Large subunit of the glutamine-dependent carbamoyl phosphate synthetase (CPSase). CPSase catalyzes the formation of carbamoyl phosphate from the ammonia moiety of glutamine, carbonate, and phosphate donated by ATP, constituting the first step of 2 biosynthetic pathways, one leading to arginine and/or urea and the other to pyrimidine nucleotides. The large subunit (synthetase) binds the substrates ammonia (free or transferred from glutamine from the small subunit), hydrogencarbonate and ATP and carries out an ATP-coupled ligase reaction, activating hydrogencarbonate by forming carboxy phosphate which reacts with ammonia to form carbamoyl phosphate. The polypeptide is Carbamoyl phosphate synthase large chain (Buchnera aphidicola subsp. Acyrthosiphon pisum (strain APS) (Acyrthosiphon pisum symbiotic bacterium)).